We begin with the raw amino-acid sequence, 92 residues long: Small ribosomal subunit protein bS20 (92 aa).

The interval 1-23 is disordered; sequence MANTPSAKKRAKQAEKRRSHNAS. Positions 7-20 are enriched in basic residues; the sequence is AKKRAKQAEKRRSH.

The protein belongs to the bacterial ribosomal protein bS20 family.

Binds directly to 16S ribosomal RNA. This chain is Small ribosomal subunit protein bS20, found in Pseudomonas entomophila (strain L48).